Here is an 86-residue protein sequence, read N- to C-terminus: Cell division topological specificity factor (86 aa).

It belongs to the MinE family.

Functionally, prevents the cell division inhibition by proteins MinC and MinD at internal division sites while permitting inhibition at polar sites. This ensures cell division at the proper site by restricting the formation of a division septum at the midpoint of the long axis of the cell. This is Cell division topological specificity factor from Albidiferax ferrireducens (strain ATCC BAA-621 / DSM 15236 / T118) (Rhodoferax ferrireducens).